We begin with the raw amino-acid sequence, 429 residues long: Tyrosine-protein kinase STYK1 (429 aa).

Residues 30-50 (VIIVPALLVGGFLILLAIILW) traverse the membrane as a helical segment. Positions 58–83 (SQRQSPGPRGTASVPASRGRSQEAAG) are disordered. Positions 119-390 (LEVLEQIHSG…GQLLQRLEAA (272 aa)) constitute a Protein kinase domain. Residues 125 to 133 (IHSGSCGTL) and Lys152 each bind ATP. Residue Asp256 is the Proton acceptor of the active site.

Belongs to the protein kinase superfamily. Tyr protein kinase family. In terms of tissue distribution, highly expressed in colon and small intestine. Weakly or not expressed in spleen, skeletal muscle, liver, kidney, heart and brain. Expressed in transformed kidney cell lines (COS-1 and HEK293T).

Its subcellular location is the membrane. The enzyme catalyses L-tyrosyl-[protein] + ATP = O-phospho-L-tyrosyl-[protein] + ADP + H(+). In terms of biological role, probable tyrosine protein-kinase, which has strong transforming capabilities on a variety of cell lines including NIH 3T3 fibroblasts and on athymic nude mice. When overexpressed, it can also induce tumor cell invasion as well as metastasis in distant organs. May act by activating both MAP kinase and phosphatidylinositol 3'-kinases (PI3K) pathways. The sequence is that of Tyrosine-protein kinase STYK1 (Styk1) from Mus musculus (Mouse).